The chain runs to 140 residues: Small ribosomal subunit protein uS12 (140 aa).

Disordered stretches follow at residues 1-20 and 35-55; these read MPTI…VKSD and QTNV…TMTP. At aspartate 102 the chain carries 3-methylthioaspartic acid. The disordered stretch occupies residues 121 to 140; sequence DGRMQGRSKYGTKRPKAAKK. Over residues 130-140 the composition is skewed to basic residues; it reads YGTKRPKAAKK.

Belongs to the universal ribosomal protein uS12 family. Part of the 30S ribosomal subunit. Contacts proteins S8 and S17. May interact with IF1 in the 30S initiation complex.

With S4 and S5 plays an important role in translational accuracy. In terms of biological role, interacts with and stabilizes bases of the 16S rRNA that are involved in tRNA selection in the A site and with the mRNA backbone. Located at the interface of the 30S and 50S subunits, it traverses the body of the 30S subunit contacting proteins on the other side and probably holding the rRNA structure together. The combined cluster of proteins S8, S12 and S17 appears to hold together the shoulder and platform of the 30S subunit. In Exiguobacterium sp. (strain ATCC BAA-1283 / AT1b), this protein is Small ribosomal subunit protein uS12.